A 502-amino-acid polypeptide reads, in one-letter code: Potassium channel KAT3 (502 aa).

Residues 1–67 (MPRSSRMNLW…PYDPRYKVWE (67 aa)) are Cytoplasmic-facing. The helical transmembrane segment at 68-88 (TFLIILVVYSAWICPLEFAFL) threads the bilayer. Topologically, residues 89–95 (RYLPSAP) are extracellular. A helical membrane pass occupies residues 96-116 (FVVDDVVNGFFAVDIMLTFFV). Residues 117 to 138 (PFVDKKSYLLVNDPKKIAVRYL) lie on the Cytoplasmic side of the membrane. The chain crosses the membrane as a helical span at residues 139–159 (SSWFVFDVCSTVPFHSISLLF). Over 160 to 169 (NEHGHDLGFK) the chain is Extracellular. A helical; Voltage-sensor membrane pass occupies residues 170–190 (FLNVLRLWRLRRVSSMFARLE). The Cytoplasmic portion of the chain corresponds to 191 to 204 (KDIRFNYAVIRCTK). The helical transmembrane segment at 205–225 (LISVTLFAIHCAGCINYLIAD) threads the bilayer. Over 226–252 (RYPDPRRTWIGAVMPNFREDGLWIRYV) the chain is Extracellular. The pore-forming intramembrane region spans 253–272 (TAMYWSITTLTTTGYGDLHA). The Extracellular portion of the chain corresponds to 273–276 (ENAR). The chain crosses the membrane as a helical span at residues 277–297 (EMLFGICYMLFNLWLTAYLIG). Topologically, residues 298-502 (NMTNLVVHST…IRSNLQQVNV (205 aa)) are cytoplasmic. An a nucleoside 3',5'-cyclic phosphate-binding site is contributed by 381-500 (LFKGVSSRFI…DIIRSNLQQV (120 aa)).

It belongs to the potassium channel family. Plant (TC 1.A.1.4) subfamily.

The protein localises to the membrane. Functionally, probable inward-rectifying potassium channel. Assuming opened or closed conformations in response to the voltage difference across the membrane, the channel is activated by hyperpolarization. The chain is Potassium channel KAT3 from Oryza sativa subsp. japonica (Rice).